We begin with the raw amino-acid sequence, 106 residues long: RNA-binding protein Hfq (106 aa).

One can recognise a Sm domain in the interval 9–68 (DPYLNALRKERVPVSIYLVNGIKLQGQIESFDAFVILLRNNISQMVYKHAVSTIVPSRNI). The interval 78 to 106 (EDEAGEEISAEYTPNAEGQAEATADPLYD) is disordered.

The protein belongs to the Hfq family. In terms of assembly, homohexamer.

Functionally, RNA chaperone that binds small regulatory RNA (sRNAs) and mRNAs to facilitate mRNA translational regulation in response to envelope stress, environmental stress and changes in metabolite concentrations. Also binds with high specificity to tRNAs. This is RNA-binding protein Hfq from Dichelobacter nodosus (strain VCS1703A).